The chain runs to 502 residues: Probable glycerol kinase (502 aa).

Position 11 (T11) interacts with substrate. R15 is a binding site for ATP. Substrate contacts are provided by R85, Y140, and D246. ATP-binding positions include T268, G313, and 416 to 420; that span reads GMIAN.

Belongs to the FGGY kinase family.

The enzyme catalyses glycerol + ATP = sn-glycerol 3-phosphate + ADP + H(+). It functions in the pathway polyol metabolism; glycerol degradation via glycerol kinase pathway; sn-glycerol 3-phosphate from glycerol: step 1/1. The sequence is that of Probable glycerol kinase from Caenorhabditis elegans.